A 441-amino-acid chain; its full sequence is GPI mannosyltransferase 2 (441 aa).

10 helical membrane passes run 4 to 24 (MTVLSPSAGSQSACSLGLILV), 35 to 55 (ILFGLWKALIFLVIVICPGLG), 115 to 135 (LLALLASVLVLYRLSVNIFGG), 143 to 163 (LCFLSAALHIISPAGAFLSAP), 165 to 185 (GEALFSLLNISGLYLYSSSVL), 199 to 223 (LLAAAVLISAATAVRSNGILGGVLF), 249 to 269 (VIVLGGCVIALGMAVPQYIAF), 306 to 326 (YWVVPNIPLFLLAMPILALLL), 361 to 381 (LAIIQALLAVLAFTSYHVQII), and 418 to 438 (VAVQAIMIYGLIHAVLFGSFL).

The protein belongs to the PIGV family.

It is found in the endoplasmic reticulum membrane. It functions in the pathway glycolipid biosynthesis; glycosylphosphatidylinositol-anchor biosynthesis. In terms of biological role, mannosyltransferase involved in glycosylphosphatidylinositol-anchor biosynthesis. Transfers the second mannose to the glycosylphosphatidylinositol during GPI precursor assembly. This Aspergillus fumigatus (strain ATCC MYA-4609 / CBS 101355 / FGSC A1100 / Af293) (Neosartorya fumigata) protein is GPI mannosyltransferase 2 (gpi18).